The sequence spans 406 residues: Bifunctional enzyme IspD/IspF (406 aa).

The interval 1–247 (MSLIRVNGEA…ALFFNPAKDT (247 aa)) is 2-C-methyl-D-erythritol 4-phosphate cytidylyltransferase. Residues 248–406 (FIGMGFDTHA…HVSMRYKQKL (159 aa)) are 2-C-methyl-D-erythritol 2,4-cyclodiphosphate synthase. A divalent metal cation-binding residues include D254 and H256. 4-CDP-2-C-methyl-D-erythritol 2-phosphate contacts are provided by residues 254-256 (DTH) and 280-281 (HS). H288 lines the a divalent metal cation pocket. 4-CDP-2-C-methyl-D-erythritol 2-phosphate contacts are provided by residues 302–304 (DIG), 307–311 (FPDND), 378–381 (TTME), F385, and K388.

The protein in the N-terminal section; belongs to the IspD/TarI cytidylyltransferase family. IspD subfamily. In the C-terminal section; belongs to the IspF family. The cofactor is a divalent metal cation.

It catalyses the reaction 2-C-methyl-D-erythritol 4-phosphate + CTP + H(+) = 4-CDP-2-C-methyl-D-erythritol + diphosphate. The catalysed reaction is 4-CDP-2-C-methyl-D-erythritol 2-phosphate = 2-C-methyl-D-erythritol 2,4-cyclic diphosphate + CMP. It participates in isoprenoid biosynthesis; isopentenyl diphosphate biosynthesis via DXP pathway; isopentenyl diphosphate from 1-deoxy-D-xylulose 5-phosphate: step 2/6. It functions in the pathway isoprenoid biosynthesis; isopentenyl diphosphate biosynthesis via DXP pathway; isopentenyl diphosphate from 1-deoxy-D-xylulose 5-phosphate: step 4/6. Functionally, bifunctional enzyme that catalyzes the formation of 4-diphosphocytidyl-2-C-methyl-D-erythritol from CTP and 2-C-methyl-D-erythritol 4-phosphate (MEP) (IspD), and catalyzes the conversion of 4-diphosphocytidyl-2-C-methyl-D-erythritol 2-phosphate (CDP-ME2P) to 2-C-methyl-D-erythritol 2,4-cyclodiphosphate (ME-CPP) with a corresponding release of cytidine 5-monophosphate (CMP) (IspF). In Helicobacter pylori (strain P12), this protein is Bifunctional enzyme IspD/IspF.